A 222-amino-acid polypeptide reads, in one-letter code: PKHD-type hydroxylase P9301_13621 (222 aa).

The 95-residue stretch at 81-175 folds into the Fe2OG dioxygenase domain; it reads KIHGIMFTKS…RLVCVGWIES (95 aa). His99, Asp101, and His156 together coordinate Fe cation. Arg166 lines the 2-oxoglutarate pocket.

Requires Fe(2+) as cofactor. L-ascorbate serves as cofactor.

This is PKHD-type hydroxylase P9301_13621 from Prochlorococcus marinus (strain MIT 9301).